A 401-amino-acid polypeptide reads, in one-letter code: Succinyl-diaminopimelate desuccinylase (401 aa).

His82 contacts Zn(2+). Asp84 is a catalytic residue. Zn(2+) is bound at residue Asp115. The active-site Proton acceptor is Glu149. Zn(2+)-binding residues include Glu150, Glu178, and His364.

This sequence belongs to the peptidase M20A family. DapE subfamily. As to quaternary structure, homodimer. It depends on Zn(2+) as a cofactor. Co(2+) serves as cofactor.

It carries out the reaction N-succinyl-(2S,6S)-2,6-diaminopimelate + H2O = (2S,6S)-2,6-diaminopimelate + succinate. The protein operates within amino-acid biosynthesis; L-lysine biosynthesis via DAP pathway; LL-2,6-diaminopimelate from (S)-tetrahydrodipicolinate (succinylase route): step 3/3. In terms of biological role, catalyzes the hydrolysis of N-succinyl-L,L-diaminopimelic acid (SDAP), forming succinate and LL-2,6-diaminopimelate (DAP), an intermediate involved in the bacterial biosynthesis of lysine and meso-diaminopimelic acid, an essential component of bacterial cell walls. This chain is Succinyl-diaminopimelate desuccinylase, found in Verminephrobacter eiseniae (strain EF01-2).